The following is a 380-amino-acid chain: Queuine tRNA-ribosyltransferase (380 aa).

The active-site Proton acceptor is the D96. Substrate contacts are provided by residues 96-100, D150, Q193, and G220; that span reads DSGGF. The tract at residues 251–257 is RNA binding; that stretch reads GVGAPDS. D270 acts as the Nucleophile in catalysis. The segment at 275 to 279 is RNA binding; important for wobble base 34 recognition; that stretch reads TRIAR. 4 residues coordinate Zn(2+): C308, C310, C313, and H339.

The protein belongs to the queuine tRNA-ribosyltransferase family. In terms of assembly, homodimer. Within each dimer, one monomer is responsible for RNA recognition and catalysis, while the other monomer binds to the replacement base PreQ1. Zn(2+) serves as cofactor.

It carries out the reaction 7-aminomethyl-7-carbaguanine + guanosine(34) in tRNA = 7-aminomethyl-7-carbaguanosine(34) in tRNA + guanine. It participates in tRNA modification; tRNA-queuosine biosynthesis. In terms of biological role, catalyzes the base-exchange of a guanine (G) residue with the queuine precursor 7-aminomethyl-7-deazaguanine (PreQ1) at position 34 (anticodon wobble position) in tRNAs with GU(N) anticodons (tRNA-Asp, -Asn, -His and -Tyr). Catalysis occurs through a double-displacement mechanism. The nucleophile active site attacks the C1' of nucleotide 34 to detach the guanine base from the RNA, forming a covalent enzyme-RNA intermediate. The proton acceptor active site deprotonates the incoming PreQ1, allowing a nucleophilic attack on the C1' of the ribose to form the product. After dissociation, two additional enzymatic reactions on the tRNA convert PreQ1 to queuine (Q), resulting in the hypermodified nucleoside queuosine (7-(((4,5-cis-dihydroxy-2-cyclopenten-1-yl)amino)methyl)-7-deazaguanosine). The chain is Queuine tRNA-ribosyltransferase from Streptococcus pyogenes serotype M6 (strain ATCC BAA-946 / MGAS10394).